The chain runs to 770 residues: Serine/threonine-protein kinase PLK4 (770 aa).

The Protein kinase domain maps to 14-267 (YEVQHLLGKG…LEHVLRHPFL (254 aa)). ATP contacts are provided by residues 20–28 (LGKGGFASV) and lysine 43. The active-site Proton acceptor is aspartate 138. Residues 383-500 (EERISVPPLN…DRFVGLVKSK (118 aa)) enclose the Cryptic POLO box 1 (CPB1) domain. A Cryptic POLO box 2 (CPB2) domain is found at 501 to 604 (TPKVTYFSAL…GRRPVTEVQP (104 aa)). Residues 662 to 741 (PIKRINLPDI…LPHIQLKLKT (80 aa)) form the POLO box domain.

Belongs to the protein kinase superfamily. Ser/Thr protein kinase family. CDC5/Polo subfamily. Homodimer. Post-translationally, ubiquitinated by the SCF(Slimb) ubiquitin ligase complex; leading to its degradation by the proteasome during interphase and regulating centriole number and ensuring the block to centriole reduplication.

It localises to the cytoplasm. The protein resides in the cytoskeleton. The protein localises to the microtubule organizing center. It is found in the centrosome. Its subcellular location is the centriole. It catalyses the reaction L-seryl-[protein] + ATP = O-phospho-L-seryl-[protein] + ADP + H(+). The enzyme catalyses L-threonyl-[protein] + ATP = O-phospho-L-threonyl-[protein] + ADP + H(+). Its function is as follows. Serine/threonine-protein kinase that plays a central role in centriole duplication. Able to trigger procentriole formation on the surface of the mother centriole cylinder, using mother centriole as a platform, leading to the recruitment of centriole biogenesis proteins such as sas-6. When overexpressed, it is able to induce centrosome amplification through the simultaneous generation of multiple procentrioles adjoining each parental centriole during S phase. Centrosome amplification following overexpression can initiate tumorigenesis, highlighting the importance of centrosome regulation in cancers. This chain is Serine/threonine-protein kinase PLK4 (SAK), found in Drosophila ananassae (Fruit fly).